We begin with the raw amino-acid sequence, 356 residues long: MAPSSSPLRTTSETDEKYANVKWEELGFALTPIDYMYVAKCRQGESFTQGKIVPYGDISISPCSPILNYGQGLFEGLKAYRTEDDRIRIFRPDQNALRMQTGAERLCMTPPTLEQFVEAVKQTVLANKKWVPPPGKGTLYIRPLLLGSGATLGVAPAPEYTFLIYASPVGDYHKVSSGLNLKVDHKYHRAHSGGTGGVKSCTNYSPVVKSLLEAKSAGFSDVLFLDAATGRNIEELTACNIFIVKGNIVSTPPTSGTILPGVTRKSISELAHDIGYQVEERDVSVDELLEAEEVFCTGTAVVVKAVETVTFHDKKVKYRTGEAALSTKLHSMLTNIQMGVVEDKKGWMVDIDPCQG.

Lys-199 bears the N6-(pyridoxal phosphate)lysine mark.

The protein belongs to the class-IV pyridoxal-phosphate-dependent aminotransferase family. Requires pyridoxal 5'-phosphate as cofactor.

It is found in the cytoplasm. It carries out the reaction L-leucine + 2-oxoglutarate = 4-methyl-2-oxopentanoate + L-glutamate. The enzyme catalyses L-isoleucine + 2-oxoglutarate = (S)-3-methyl-2-oxopentanoate + L-glutamate. The catalysed reaction is L-valine + 2-oxoglutarate = 3-methyl-2-oxobutanoate + L-glutamate. It functions in the pathway amino-acid biosynthesis; L-isoleucine biosynthesis; L-isoleucine from 2-oxobutanoate: step 4/4. It participates in amino-acid biosynthesis; L-leucine biosynthesis; L-leucine from 3-methyl-2-oxobutanoate: step 4/4. Its pathway is amino-acid biosynthesis; L-valine biosynthesis; L-valine from pyruvate: step 4/4. In terms of biological role, converts 2-oxo acids to branched-chain amino acids. Acts on leucine, isoleucine and valine. This chain is Branched-chain-amino-acid aminotransferase 6 (BCAT6), found in Arabidopsis thaliana (Mouse-ear cress).